The primary structure comprises 63 residues: Large ribosomal subunit protein bL32c (63 aa).

Residues 39-63 form a disordered region; that stretch reads SFSSGNEHPKPKGFSGQQTNNKIFE. A compositionally biased stretch (polar residues) spans 53–63; sequence SGQQTNNKIFE.

It belongs to the bacterial ribosomal protein bL32 family.

Its subcellular location is the plastid. It is found in the chloroplast. This is Large ribosomal subunit protein bL32c from Triticum aestivum (Wheat).